A 601-amino-acid chain; its full sequence is Elongation factor 4 (601 aa).

The region spanning 7–189 is the tr-type G domain; sequence RNIRNFSIIA…AIVHRIPPPK (183 aa). GTP is bound by residues 19-24 and 136-139; these read DHGKST and NKID.

Belongs to the TRAFAC class translation factor GTPase superfamily. Classic translation factor GTPase family. LepA subfamily.

The protein resides in the cell inner membrane. The enzyme catalyses GTP + H2O = GDP + phosphate + H(+). Its function is as follows. Required for accurate and efficient protein synthesis under certain stress conditions. May act as a fidelity factor of the translation reaction, by catalyzing a one-codon backward translocation of tRNAs on improperly translocated ribosomes. Back-translocation proceeds from a post-translocation (POST) complex to a pre-translocation (PRE) complex, thus giving elongation factor G a second chance to translocate the tRNAs correctly. Binds to ribosomes in a GTP-dependent manner. The sequence is that of Elongation factor 4 from Xanthomonas axonopodis pv. citri (strain 306).